A 204-amino-acid chain; its full sequence is Matrix-remodeling-associated protein 7 (204 aa).

The helical transmembrane segment at 7–27 (LLAALPALATALALLLAWLLV) threads the bilayer. Positions 32-148 (AASPEPARAP…FSFKYSPGKL (117 aa)) are disordered. Pro residues predominate over residues 38–47 (ARAPPEPAPP). Positions 63-103 (EPAASPAGPEEPGEPAGLGELGEPAGPGEPEGPGDPAAAPA) are enriched in low complexity. Positions 110–126 (VEARQEEEQDLDGEKGP) are enriched in basic and acidic residues. Serine 191 carries the post-translational modification Phosphoserine.

The protein localises to the membrane. The polypeptide is Matrix-remodeling-associated protein 7 (MXRA7) (Homo sapiens (Human)).